A 296-amino-acid polypeptide reads, in one-letter code: Bifunctional protein FolD (296 aa).

Residues 168 to 170 (GRS), Ser197, and Thr238 contribute to the NADP(+) site.

The protein belongs to the tetrahydrofolate dehydrogenase/cyclohydrolase family. In terms of assembly, homodimer.

It carries out the reaction (6R)-5,10-methylene-5,6,7,8-tetrahydrofolate + NADP(+) = (6R)-5,10-methenyltetrahydrofolate + NADPH. The enzyme catalyses (6R)-5,10-methenyltetrahydrofolate + H2O = (6R)-10-formyltetrahydrofolate + H(+). It functions in the pathway one-carbon metabolism; tetrahydrofolate interconversion. In terms of biological role, catalyzes the oxidation of 5,10-methylenetetrahydrofolate to 5,10-methenyltetrahydrofolate and then the hydrolysis of 5,10-methenyltetrahydrofolate to 10-formyltetrahydrofolate. The sequence is that of Bifunctional protein FolD from Porphyromonas gingivalis (strain ATCC BAA-308 / W83).